Here is a 341-residue protein sequence, read N- to C-terminus: Nicotinate-nucleotide--dimethylbenzimidazole phosphoribosyltransferase (341 aa).

Glutamate 306 serves as the catalytic Proton acceptor.

Belongs to the CobT family.

It carries out the reaction 5,6-dimethylbenzimidazole + nicotinate beta-D-ribonucleotide = alpha-ribazole 5'-phosphate + nicotinate + H(+). It functions in the pathway nucleoside biosynthesis; alpha-ribazole biosynthesis; alpha-ribazole from 5,6-dimethylbenzimidazole: step 1/2. Functionally, catalyzes the synthesis of alpha-ribazole-5'-phosphate from nicotinate mononucleotide (NAMN) and 5,6-dimethylbenzimidazole (DMB). The polypeptide is Nicotinate-nucleotide--dimethylbenzimidazole phosphoribosyltransferase (Methylocella silvestris (strain DSM 15510 / CIP 108128 / LMG 27833 / NCIMB 13906 / BL2)).